A 206-amino-acid polypeptide reads, in one-letter code: MELKVTTLEGKDAGSVQLSDEIFGLDPRSDIIQRCVIWQLAKRQAGTHKAKGRAEIWRTGKKMYKQKGTGGARHGSQRVPQFRGGGRAFGPVVRSHAIDLPKKVRAMALKHALSAKAKDGGLIVIDQATLDSAKTKALVGHFAGLGLTSALIIDGAELNNGFAVAARNIPNIDVLPIQGINVYDILRRQKLVLTKAAVDALEARFK.

The protein belongs to the universal ribosomal protein uL4 family. As to quaternary structure, part of the 50S ribosomal subunit.

In terms of biological role, one of the primary rRNA binding proteins, this protein initially binds near the 5'-end of the 23S rRNA. It is important during the early stages of 50S assembly. It makes multiple contacts with different domains of the 23S rRNA in the assembled 50S subunit and ribosome. Functionally, forms part of the polypeptide exit tunnel. The protein is Large ribosomal subunit protein uL4 of Rhodopseudomonas palustris (strain BisA53).